We begin with the raw amino-acid sequence, 273 residues long: Dermonecrotic toxin LdSicTox-alphaIB1avi (273 aa).

Residue histidine 5 is part of the active site. 2 residues coordinate Mg(2+): glutamate 25 and aspartate 27. Residue histidine 41 is the Nucleophile of the active site. 2 disulfides stabilise this stretch: cysteine 45–cysteine 51 and cysteine 47–cysteine 190. Aspartate 85 serves as a coordination point for Mg(2+). Asparagine 250 carries an N-linked (GlcNAc...) asparagine glycan.

Belongs to the arthropod phospholipase D family. Class II subfamily. Mg(2+) is required as a cofactor. Expressed by the venom gland.

It localises to the secreted. The catalysed reaction is an N-(acyl)-sphingosylphosphocholine = an N-(acyl)-sphingosyl-1,3-cyclic phosphate + choline. The enzyme catalyses an N-(acyl)-sphingosylphosphoethanolamine = an N-(acyl)-sphingosyl-1,3-cyclic phosphate + ethanolamine. It carries out the reaction a 1-acyl-sn-glycero-3-phosphocholine = a 1-acyl-sn-glycero-2,3-cyclic phosphate + choline. It catalyses the reaction a 1-acyl-sn-glycero-3-phosphoethanolamine = a 1-acyl-sn-glycero-2,3-cyclic phosphate + ethanolamine. In terms of biological role, dermonecrotic toxins cleave the phosphodiester linkage between the phosphate and headgroup of certain phospholipids (sphingolipid and lysolipid substrates), forming an alcohol (often choline) and a cyclic phosphate. This toxin acts on sphingomyelin (SM). It may also act on ceramide phosphoethanolamine (CPE), lysophosphatidylcholine (LPC) and lysophosphatidylethanolamine (LPE), but not on lysophosphatidylserine (LPS), and lysophosphatidylglycerol (LPG). It acts by transphosphatidylation, releasing exclusively cyclic phosphate products as second products. Induces dermonecrosis, hemolysis, increased vascular permeability, edema, inflammatory response, and platelet aggregation. The polypeptide is Dermonecrotic toxin LdSicTox-alphaIB1avi (Loxosceles deserta (Desert recluse spider)).